Here is an 845-residue protein sequence, read N- to C-terminus: uncharacterized protein (845 aa).

Residues 224–241 (SNNIPTGIQDSSKYTVNG) show a composition bias toward polar residues. Disordered regions lie at residues 224 to 244 (SNNI…GPTE), 324 to 346 (QGTE…ANNG), 383 to 434 (RTAN…EGSA), 456 to 485 (VKAS…ATLN), 519 to 619 (NMTL…PKNS), 674 to 701 (VVSR…DSSP), and 739 to 785 (RKST…ANKS). The span at 390–399 (PTKKSNRSEQ) shows a compositional bias: basic and acidic residues. Polar residues predominate over residues 400-422 (SKTVANTNVGSKNGTTPRSFAQK). Basic and acidic residues predominate over residues 534 to 546 (NSWRSKYLSEGKN). Low complexity predominate over residues 563-576 (SSLASPTKSSASPL). Ser567 bears the Phosphoserine mark. Basic and acidic residues-rich tracts occupy residues 579 to 588 (APKETPERLC) and 600 to 614 (ANLK…KSDI). 3 stretches are compositionally biased toward polar residues: residues 674-683 (VVSRTVTSPK), 691-701 (SKASYNQDSSP), and 743-760 (ADSL…TPKA).

The protein localises to the mitochondrion. This is an uncharacterized protein from Schizosaccharomyces pombe (strain 972 / ATCC 24843) (Fission yeast).